The chain runs to 416 residues: Calreticulin (416 aa).

An N-terminal signal peptide occupies residues 1 to 17 (MLLSVPLLLGLLGLAAA). The tract at residues 18–197 (DPAIYFKEQF…NSQVESGSLE (180 aa)) is N-domain. Ca(2+) is bound at residue Gln-26. An N6-acetyllysine modification is found at Lys-48. Ca(2+) is bound by residues Lys-62 and Lys-64. Position 64 is an N6-(2-hydroxyisobutyryl)lysine (Lys-64). Cys-105 and Cys-137 form a disulfide bridge. An alpha-D-glucoside is bound by residues Tyr-109, Lys-111, Tyr-128, and Asp-135. An N6-acetyllysine modification is found at Lys-159. Residues 191–202 (VESGSLEDDWDF) form a 1-1 repeat. The segment at 191-255 (VESGSLEDDW…DAKKPEDWDE (65 aa)) is 4 X approximate repeats. The segment at 193-277 (SGSLEDDWDF…NPEYKGEWKP (85 aa)) is disordered. The P-domain stretch occupies residues 198–308 (DDWDFLPPKK…YSPDANIYAY (111 aa)). Residues 207–251 (KIKDPDAAKPEDWDERAKIDDPTDSKPEDWDKPEHIPDPDAKKPE) show a composition bias toward basic and acidic residues. N6-acetyllysine is present on Lys-209. 6 consecutive repeat copies span residues 210–221 (DPDAAKPEDWDE), 227–238 (DPTDSKPEDWDK), 244–255 (DPDAKKPEDWDE), 259–269 (GEWEPPVIQNP), 273–283 (GEWKPRQIDNP), and 287–297 (GTWIHPEIDNP). The interaction with PPIB stretch occupies residues 237–270 (DKPEHIPDPDAKKPEDWDEEMDGEWEPPVIQNPE). A compositionally biased stretch (acidic residues) spans 252–261 (DWDEEMDGEW). Positions 259-297 (GEWEPPVIQNPEYKGEWKPRQIDNPDYKGTWIHPEIDNP) are 3 X approximate repeats. Residues 309 to 416 (DSFAVLGLDL…ESPGQAKDEL (108 aa)) are C-domain. Position 317 (Asp-317) interacts with an alpha-D-glucoside. Ca(2+) is bound at residue Asp-328. Residues 350 to 416 (TKAAEKQMKD…ESPGQAKDEL (67 aa)) are disordered. The span at 352-379 (AAEKQMKDKQDEEQRLKEEEEDKKRKEE) shows a compositional bias: basic and acidic residues. Over residues 380-408 (EEAEDKEDDDDRDEDEDEEDEKEEDEEES) the composition is skewed to acidic residues. The Prevents secretion from ER signature appears at 413-416 (KDEL).

It belongs to the calreticulin family. In terms of assembly, monomer. Interacts with GABARAP, NR3C1, PDIA3/ERp57 and TRIM21. Interacts (via P-domain) with PDIA5. Interacts with PPIB. Interacts with SPACA9. Component of an EIF2 complex at least composed of CELF1/CUGBP1, CALR, CALR3, EIF2S1, EIF2S2, HSP90B1 and HSPA5. Interacts with CLCC1.

It localises to the endoplasmic reticulum lumen. Its subcellular location is the cytoplasm. The protein localises to the cytosol. The protein resides in the cytolytic granule. It is found in the secreted. It localises to the extracellular space. Its subcellular location is the extracellular matrix. The protein localises to the cell surface. The protein resides in the sarcoplasmic reticulum lumen. It is found in the cytoplasmic vesicle. It localises to the secretory vesicle. Its subcellular location is the cortical granule. Calcium-binding chaperone that promotes folding, oligomeric assembly and quality control in the endoplasmic reticulum (ER) via the calreticulin/calnexin cycle. This lectin interacts transiently with almost all of the monoglucosylated glycoproteins that are synthesized in the ER. Interacts with the DNA-binding domain of NR3C1 and mediates its nuclear export. Involved in maternal gene expression regulation. May participate in oocyte maturation via the regulation of calcium homeostasis. Present in the cortical granules of non-activated oocytes, is exocytosed during the cortical reaction in response to oocyte activation and might participate in the block to polyspermy. The polypeptide is Calreticulin (Calr) (Mus musculus (Mouse)).